The sequence spans 148 residues: SsrA-binding protein (148 aa).

Over residues 129 to 142 the composition is skewed to basic and acidic residues; it reads ETEKKRDWEREKAR. The interval 129 to 148 is disordered; that stretch reads ETEKKRDWEREKARIMRAGT.

The protein belongs to the SmpB family.

The protein resides in the cytoplasm. Functionally, required for rescue of stalled ribosomes mediated by trans-translation. Binds to transfer-messenger RNA (tmRNA), required for stable association of tmRNA with ribosomes. tmRNA and SmpB together mimic tRNA shape, replacing the anticodon stem-loop with SmpB. tmRNA is encoded by the ssrA gene; the 2 termini fold to resemble tRNA(Ala) and it encodes a 'tag peptide', a short internal open reading frame. During trans-translation Ala-aminoacylated tmRNA acts like a tRNA, entering the A-site of stalled ribosomes, displacing the stalled mRNA. The ribosome then switches to translate the ORF on the tmRNA; the nascent peptide is terminated with the 'tag peptide' encoded by the tmRNA and targeted for degradation. The ribosome is freed to recommence translation, which seems to be the essential function of trans-translation. The polypeptide is SsrA-binding protein (Burkholderia lata (strain ATCC 17760 / DSM 23089 / LMG 22485 / NCIMB 9086 / R18194 / 383)).